The chain runs to 430 residues: Adenylosuccinate synthetase (430 aa).

GTP is bound by residues 12-18 (GDEGKGK) and 40-42 (GHT). Aspartate 13 serves as the catalytic Proton acceptor. Mg(2+)-binding residues include aspartate 13 and glycine 40. IMP-binding positions include 13 to 16 (DEGK), 38 to 41 (NAGH), threonine 129, arginine 143, glutamine 224, threonine 239, and arginine 303. Histidine 41 functions as the Proton donor in the catalytic mechanism. 299–305 (ATTGRRR) contacts substrate. GTP is bound by residues arginine 305, 331 to 333 (KLD), and 413 to 415 (SVG).

This sequence belongs to the adenylosuccinate synthetase family. In terms of assembly, homodimer. The cofactor is Mg(2+).

Its subcellular location is the cytoplasm. The enzyme catalyses IMP + L-aspartate + GTP = N(6)-(1,2-dicarboxyethyl)-AMP + GDP + phosphate + 2 H(+). It participates in purine metabolism; AMP biosynthesis via de novo pathway; AMP from IMP: step 1/2. Plays an important role in the de novo pathway of purine nucleotide biosynthesis. Catalyzes the first committed step in the biosynthesis of AMP from IMP. The chain is Adenylosuccinate synthetase from Desulfatibacillum aliphaticivorans.